The chain runs to 805 residues: Chloride channel protein (805 aa).

The Cytoplasmic portion of the chain corresponds to 1 to 48; it reads MSHEKNEASGYPEAQSWKSQEAMLGARTEVSRWRAVKNCLYRHLVKVL. Helical transmembrane passes span 49–86 and 93–116; these read GEDWIFLLLLGALMALVSWAMDFIGSRGLRFYKYLFAL and LQYLVWVCYPLALILFSSLFCQIV. The short motif at 122 to 126 is the Selectivity filter part_1 element; it reads GSGIP. Residue Ser123 coordinates chloride. Residues 125-132 constitute an intramembrane region (helical); sequence IPELKTII. A run of 2 helical transmembrane segments spans residues 141–159 and 166–184; these read LTLRTFVAKTVGLTVALSA and EGPFVHIASICATLLNQLL. The short motif at 164–168 is the Selectivity filter part_2 element; it reads GKEGP. 2 intramembrane regions (helical) span residues 201–213 and 217–225; these read ILTVGCALGISCC and PLAGVLFSI. Transmembrane regions (helical) follow at residues 237-256, 283-311, and 320-339; these read YWRGFLGGAFSAFIFRVLSV, MPAFAIIGIASGFFGALFVYLNRQIIVFM, and ILKKQRLIYPAVVTFVLATL. N-linked (GlcNAc...) asparagine glycosylation is present at Asn365. The next 2 membrane-spanning stretches (helical) occupy residues 388–408 and 416–439; these read LNIFIVMALYFVMHFWMAALA and GAFVPVFNLGAVLGRFVGELMALL. Positions 416 to 420 match the Selectivity filter part_3 motif; that stretch reads GAFVP. A chloride-binding site is contributed by Phe418. The segment at residues 456-470 is an intramembrane region (helical); that stretch reads GEYAVIGAAAMTGAV. An intramembrane region (note=Loop between two helices) is located at residues 471–472; sequence TH. Positions 473-484 form an intramembrane region, helical; sequence AVSTAVICFELT. An intramembrane region (note=Loop between two helices) is located at residues 485-489; that stretch reads GQISH. A helical transmembrane segment spans residues 490–507; sequence VLPMMVAVILANMVAQGL. Topologically, residues 508 to 805 are cytoplasmic; it reads QPSLYDSIIQ…RTATSNSSGK (298 aa). Residue Tyr512 participates in chloride binding. The CBS 1 domain occupies 543 to 601; sequence MVRDVTSIASTSTYGDLLHVLRQTKLKFFPFVDTPDTNTLLGSIDRTEVEGLLQRRISA. 2 disordered regions span residues 606-625 and 653-684; these read PAAAAEADEEGRNGETGASF and KVQTEDPRPPSPVPAEEPTQTSGIYQKKQKGT. Residues 719 to 776 enclose the CBS 2 domain; the sequence is IDQSPFQLVEGTSLQKTHTLFSLLGLDRAYVTSMGKLVGVVALAEIQAAIEGSYQKGF.

Belongs to the chloride channel (TC 2.A.49) family. ClC-0 subfamily. Homodimer. Each subunit contains a channel ('Double barreled channel').

The protein resides in the membrane. In terms of biological role, voltage-gated chloride channel. This channel is thought to ensure the high conductance of the non-innervated membrane of the electrocyte necessary for efficient current generation caused by sodium influx through the acetylcholine receptor at the innervated membrane. This chain is Chloride channel protein, found in Torpedo marmorata (Marbled electric ray).